A 216-amino-acid polypeptide reads, in one-letter code: ADP-ribosylation factor D (216 aa).

A compositionally biased stretch (low complexity) spans Ser188–Gln204. Positions Ser188–Thr216 are disordered. The segment covering Pro205–Thr216 has biased composition (polar residues).

Belongs to the small GTPase superfamily. Arf family.

The protein localises to the golgi apparatus. GTP-binding protein involved in protein trafficking; may modulate vesicle budding and uncoating within the Golgi apparatus. This is ADP-ribosylation factor D (arrD) from Dictyostelium discoideum (Social amoeba).